The sequence spans 433 residues: Type I acyl-CoA thioesterase mpaH (433 aa).

An abhydrolase domain region spans residues 58–246 (HGVGLPKELY…IKARFGTTAD (189 aa)). V60 is a binding site for substrate. The active-site Nucleophile is the S139. F140 contributes to the substrate binding site. Active-site residues include D163 and H365.

This sequence belongs to the AB hydrolase superfamily. MpaH hydrolase family. As to quaternary structure, homodimer.

It localises to the peroxisome matrix. It carries out the reaction mycophenolyl-CoA + H2O = mycophenolate + CoA + H(+). Its pathway is secondary metabolite biosynthesis; terpenoid biosynthesis. Its function is as follows. Type I acyl-CoA thioesterase; part of the gene cluster that mediates the biosynthesis of mycophenolic acid (MPA), the first isolated antibiotic natural product in the world obtained from a culture of Penicillium brevicompactum in 1893. MpaH acts as a peroxisomal acyl-CoA hydrolase that converts MPA-CoA into the final product MPA. The first step of the pathway is the synthesis of 5-methylorsellinic acid (5MOA) by the cytosolic polyketide synthase mpaC. 5MOA is then converted to the phthalide compound 5,7-dihydroxy-4,6-dimethylphthalide (DHMP) by the endoplasmic reticulum-bound cytochrome P450 monooxygenase mpaDE. MpaDE first catalyzes hydroxylation of 5-MOA to 4,6-dihydroxy-2-(hydroxymethyl)-3-methylbenzoic acid (DHMB). MpaDE then acts as a lactone synthase that catalyzes the ring closure to convert DHMB into DHMP. The next step is the prenylation of DHMP by the Golgi apparatus-associated prenyltransferase mpaA to yield farnesyl-DHMP (FDHMP). The ER-bound oxygenase mpaB then mediates the oxidative cleavage the C19-C20 double bond in FDHMP to yield FDHMP-3C via a mycophenolic aldehyde intermediate. The O-methyltransferase mpaG catalyzes the methylation of FDHMP-3C to yield MFDHMP-3C. After the cytosolic methylation of FDHMP-3C, MFDHMP-3C enters into peroxisomes probably via free diffusion due to its low molecular weight. Upon a peroxisomal CoA ligation reaction, catalyzed by a beta-oxidation component enzyme acyl-CoA ligase ACL891, MFDHMP-3C-CoA would then be restricted to peroxisomes for the following beta-oxidation pathway steps. The peroxisomal beta-oxidation machinery than converts MFDHMP-3C-CoA into MPA_CoA, via a beta-oxidation chain-shortening process. Finally mpaH acts as a peroxisomal acyl-CoA hydrolase with high substrate specificity toward MPA-CoA to release the final product MPA. The polypeptide is Type I acyl-CoA thioesterase mpaH (Penicillium brevicompactum).